Consider the following 88-residue polypeptide: Insulin-related peptide 4 (88 aa).

Positions 1–19 (MKLTLIILLVVAYSWCSEA) are cleaved as a signal peptide. Positions 20–45 (QNEARVFCGRVLSERLAALCWGPNSV) are excised as a propeptide. Arginine 65 is modified (arginine amide). The propeptide occupies 69–88 (GLATECCDKACTVEELLSYC).

It belongs to the insulin family. In terms of tissue distribution, DAGWWLTRGAARSLGGVR-amide: Expressed in corpora cardiaca (CC), corpora allata (CA), antennal lobe (AL) and gnathal ganglion (GNG) (at protein level). Expression in CC and CA detected in most animals, in AL and GNG in few animals (at protein level).

Its subcellular location is the secreted. This Agrotis ipsilon (Black cutworm moth) protein is Insulin-related peptide 4.